Consider the following 198-residue polypeptide: Acireductone dioxygenase 2 (198 aa).

Fe(2+)-binding residues include His-99, His-101, Glu-105, and His-144. Ni(2+) is bound by residues His-99, His-101, Glu-105, and His-144.

This sequence belongs to the acireductone dioxygenase (ARD) family. Fe(2+) serves as cofactor. Requires Ni(2+) as cofactor. Ubiquitous.

Its subcellular location is the cytoplasm. It localises to the nucleus. The enzyme catalyses 1,2-dihydroxy-5-(methylsulfanyl)pent-1-en-3-one + O2 = 4-methylsulfanyl-2-oxobutanoate + formate + 2 H(+). It carries out the reaction 1,2-dihydroxy-5-(methylsulfanyl)pent-1-en-3-one + O2 = 3-(methylsulfanyl)propanoate + CO + formate + 2 H(+). It participates in amino-acid biosynthesis; L-methionine biosynthesis via salvage pathway; L-methionine from S-methyl-5-thio-alpha-D-ribose 1-phosphate: step 5/6. Functionally, catalyzes 2 different reactions between oxygen and the acireductone 1,2-dihydroxy-3-keto-5-methylthiopentene (DHK-MTPene) depending upon the metal bound in the active site. Fe-containing acireductone dioxygenase (Fe-ARD) produces formate and 2-keto-4-methylthiobutyrate (KMTB), the alpha-ketoacid precursor of methionine in the methionine recycle pathway. Ni-containing acireductone dioxygenase (Ni-ARD) produces methylthiopropionate, carbon monoxide and formate, and does not lie on the methionine recycle pathway. The polypeptide is Acireductone dioxygenase 2 (ARD2) (Oryza sativa subsp. indica (Rice)).